Consider the following 174-residue polypeptide: Glyoxylase I 4 (174 aa).

One can recognise a VOC domain in the interval 13-135 (SLNHVSVLCR…DGFMIEICNC (123 aa)). Glutamate 131 functions as the Proton donor/acceptor in the catalytic mechanism.

This sequence belongs to the glyoxalase I family. In terms of tissue distribution, mostly expressed in roots, and, to a lower extent, in leaves, flowers, seeds and siliques.

Its subcellular location is the cell membrane. The protein resides in the cytoplasm. Functionally, involved in the detoxification and scavenging of methylglyoxal (MG), a cytotoxic aldehyde produced in response to primary metabolism alteration observed during biotic and abiotic stresses. Modulates cross-talk between salicylic acid (SA) and jasmonic acid (JA) signaling pathways during defense responses to pathogens such as Botrytis cinerea. In Arabidopsis thaliana (Mouse-ear cress), this protein is Glyoxylase I 4.